The sequence spans 677 residues: MFTEICGKLRTCIYKKVAFSRPLGCNLRQLPVFRDFHNSVSCLRENDKALDELNATILRLQRRIDASKSISLQQKQTQEFPRNEKLLSFLLDNTLRSNVSDKETHSVPPKSKSVLPSEDNILVQRLGVPETSFNKYFQLEPTAESISHKSVLAPEVWKSRLDNLFRYSVPFEKCNLNQVIELVTHLPSSFRASYAKNILDCLKQVCLTPSVYLLNILLHASAKHSTLEETLNVYNAYNQFQLKPDNYTFVSLIIAYSLHKQIVKAFSLLSEMKRLKIEANTHVFNTYIAILYHERLYEQAWRLFDYMKFKSLQSQPDDKTYSYMISVCTAERKVEKALNLYQEMQERPINPLTPSSRTIDAILRALARYPRYHSKFWSIFEELRAEQWKPGAQTFVAFAQLFSYGGQVNSLKRWISRIWSMSGETPDAKTIELLFQYLFRAYSNVKFNQEPSLEQVPNEKTGDDASISSPSNQLSLKLPFLLSSSSGDITKEELIHEAKECYHYLQQYHPTVLSVHLRTTYMSIFKNHGCMDEVKEFYAKSFRPAKLPSSHVVSNQNETTCNKDLPFRDIHVYACAINGASVSNDFAFGYAVWLEYLHCKSYLPEVLNGDKIEFEITKSMIILFARNQFLHLAVKLLNETKDRHWKWTRRSLGIMHKVAFLSQDKPALDLIEEIVLD.

The transit peptide at 1 to 43 directs the protein to the mitochondrion; it reads MFTEICGKLRTCIYKKVAFSRPLGCNLRQLPVFRDFHNSVSCL. 6 PPR repeats span residues 210–244, 245–279, 280–314, 317–351, 355–390, and 569–604; these read SVYLLNILLHASAKHSTLEETLNVYNAYNQFQLKP, DNYTFVSLIIAYSLHKQIVKAFSLLSEMKRLKIEA, NTHVFNTYIAILYHERLYEQAWRLFDYMKFKSLQS, DDKTYSYMISVCTAERKVEKALNLYQEMQERPINP, SSRTIDAILRALARYPRYHSKFWSIFEELRAEQWKP, and DIHVYACAINGASVSNDFAFGYAVWLEYLHCKSYLP.

It belongs to the CCM1 family. In terms of assembly, binds to mitochondrial small subunit 15S rRNA.

It is found in the mitochondrion. Its function is as follows. Regulates mitochondrial small subunit maturation by controlling 15S rRNA 5'-end processing. Localizes to the 5' precursor of the 15S rRNA in a position that is subsequently occupied by mS47 in the mature yeast mtSSU. Uses structure and sequence-specific RNA recognition, binding to a single-stranded region of the precursor and specifically recognizing bases -6 to -1. The exchange of Ccm1 for mS47 is coupled to the irreversible removal of precursor rRNA that is accompanied by conformational changes of the mitoribosomal proteins uS5m and mS26. These conformational changes signal completion of 5'-end rRNA processing through protection of the mature 5'-end of the 15S rRNA and stabilization of mS47. The removal of the 5' precursor together with the dissociation of Ccm1 may be catalyzed by the 5'-3' exoribonuclease Pet127. Involved in the specific removal of group I introns in mitochondrial encoded transcripts. The polypeptide is Mitochondrial 15S rRNA processing factor ppr3 (dmr1) (Schizosaccharomyces japonicus (strain yFS275 / FY16936) (Fission yeast)).